A 681-amino-acid polypeptide reads, in one-letter code: Dipeptidyl carboxypeptidase (681 aa).

Position 470 (histidine 470) interacts with Zn(2+). Glutamate 471 is an active-site residue. 2 residues coordinate Zn(2+): histidine 474 and histidine 477.

Belongs to the peptidase M3 family. Zn(2+) is required as a cofactor.

It is found in the cytoplasm. The enzyme catalyses Hydrolysis of unblocked, C-terminal dipeptides from oligopeptides, with broad specificity. Does not hydrolyze bonds in which P1' is Pro, or both P1 and P1' are Gly.. With respect to regulation, stimulated by Mn(2+), Mg(2+), Co(2+) and Ca(2+), inhibited by Cu(2+), Ni(2+), Zn(2+), chymostatin and 1,10-phenanthroline. Its function is as follows. Removes dipeptides from the C-termini of N-blocked tripeptides, tetrapeptides and larger peptides. This Escherichia coli (strain K12) protein is Dipeptidyl carboxypeptidase.